A 475-amino-acid chain; its full sequence is 3-hydroxyacyl-CoA dehydrogenase-like protein LAM1 (475 aa).

99 to 104 contributes to the NAD(+) binding site; that stretch reads GTRPFA. Lysine 149 provides a ligand contact to CoA. Asparagine 245 is a binding site for NAD(+).

This sequence belongs to the 3-hydroxyacyl-CoA dehydrogenase family.

The protein operates within mycotoxin biosynthesis. 3-hydroxyacyl-CoA dehydrogenase-like protein; part of the Tox1A locus, one of the 2 loci that mediate the biosynthesis of T-toxin, a family of linear polyketides 37 to 45 carbons in length, of which the major component is 41 carbons, and which leads to high virulence to maize. One of the PKSs (PKS1 or PKS2) could synthesize a precursor, used subsequently by the other PKS as starter unit, to add additional carbons. Variability in the length of the final carbon backbone C35-47 could be achieved by varying the number of condensation cycles, or use of different starter or extender units or might be due to decarboxylation of the penultimate product, catalyzed by DEC1. Additional proteins are required for the biosynthesis of T-toxin, including oxidoreductases RED1, RED2, RED3, LAM1 and OXI1, as well as esterase TOX9. In Cochliobolus heterostrophus (strain C4 / ATCC 48331 / race T) (Southern corn leaf blight fungus), this protein is 3-hydroxyacyl-CoA dehydrogenase-like protein LAM1.